A 224-amino-acid polypeptide reads, in one-letter code: Lipoprotein-releasing system ATP-binding protein LolD (224 aa).

Residues 6–224 (VRLRELRRSF…VVRLHEGVLE (219 aa)) enclose the ABC transporter domain. 42-49 (GPSGSGKS) provides a ligand contact to ATP.

This sequence belongs to the ABC transporter superfamily. Lipoprotein translocase (TC 3.A.1.125) family. As to quaternary structure, the complex is composed of two ATP-binding proteins (LolD) and two transmembrane proteins (LolC and LolE).

It is found in the cell inner membrane. Part of the ABC transporter complex LolCDE involved in the translocation of mature outer membrane-directed lipoproteins, from the inner membrane to the periplasmic chaperone, LolA. Responsible for the formation of the LolA-lipoprotein complex in an ATP-dependent manner. The protein is Lipoprotein-releasing system ATP-binding protein LolD of Novosphingobium aromaticivorans (strain ATCC 700278 / DSM 12444 / CCUG 56034 / CIP 105152 / NBRC 16084 / F199).